The chain runs to 266 residues: Electron transfer flavoprotein subunit beta (266 aa).

This sequence belongs to the ETF beta-subunit/FixA family. Heterodimer of an alpha and a beta subunit. It depends on FAD as a cofactor. AMP is required as a cofactor.

In terms of biological role, the electron transfer flavoprotein serves as a specific electron acceptor for other dehydrogenases. It transfers the electrons to the main respiratory chain via ETF-ubiquinone oxidoreductase (ETF dehydrogenase). The sequence is that of Electron transfer flavoprotein subunit beta (etfB) from Mycobacterium bovis (strain ATCC BAA-935 / AF2122/97).